Consider the following 114-residue polypeptide: PDZK1-interacting protein 1 (114 aa).

Over 1–28 the chain is Extracellular; sequence MSAFGLLILGLLTAVPPASCRQGLGNLQ. The chain crosses the membrane as a helical span at residues 29–51; it reads PWMQGLIAVAVFLVLVAIAFAVN. The Cytoplasmic segment spans residues 52–114; sequence HFWCQEEPEP…EEGKVRSTPM (63 aa). Ser-85 carries the post-translational modification Phosphoserine. Residues 95 to 114 form a disordered region; it reads HENAYENVPEEEGKVRSTPM. Positions 105-114 are enriched in basic and acidic residues; sequence EEGKVRSTPM.

It belongs to the PDZK1-interacting protein 1/SMIM24 family. In terms of assembly, forms a heterodimer (via N-terminal transmembrane helix) with SLC5A2/SGLT2 (via TM13); this interaction enhances SLC5A2 transporter activity. Interacts with PDZK1.

Its subcellular location is the apical cell membrane. Functionally, auxiliary protein of electrogenic Na(+)-coupled sugar symporter SLC5A2/SGLT2 and SLC5A1/SGLT1. Essential for the transporter activity of SLC5A2/SGLT2 but not SLC5A1/SGLT1. The chain is PDZK1-interacting protein 1 from Pongo abelii (Sumatran orangutan).